The primary structure comprises 274 residues: uncharacterized protein (274 aa).

The first 19 residues, 1-19, serve as a signal peptide directing secretion; sequence MKRINKVLLSLLCLVIAYA.

This is an uncharacterized protein from Rickettsia prowazekii (strain Madrid E).